A 198-amino-acid polypeptide reads, in one-letter code: Peptide methionine sulfoxide reductase MsrA 2 (198 aa).

Residue Cys32 is part of the active site.

This sequence belongs to the MsrA Met sulfoxide reductase family.

It catalyses the reaction L-methionyl-[protein] + [thioredoxin]-disulfide + H2O = L-methionyl-(S)-S-oxide-[protein] + [thioredoxin]-dithiol. The enzyme catalyses [thioredoxin]-disulfide + L-methionine + H2O = L-methionine (S)-S-oxide + [thioredoxin]-dithiol. Has an important function as a repair enzyme for proteins that have been inactivated by oxidation. Catalyzes the reversible oxidation-reduction of methionine sulfoxide in proteins to methionine. This Rhizobium meliloti (strain 1021) (Ensifer meliloti) protein is Peptide methionine sulfoxide reductase MsrA 2 (msrA2).